A 532-amino-acid chain; its full sequence is Mitogen-activated protein kinase kinase mkk1 (532 aa).

Residues 235–505 (IVELGGLGEG…PWKMLEHPWM (271 aa)) form the Protein kinase domain. ATP contacts are provided by residues 241–249 (LGEGAGGAV) and lysine 264. Catalysis depends on aspartate 362, which acts as the Proton acceptor.

Belongs to the protein kinase superfamily. STE Ser/Thr protein kinase family. MAP kinase kinase subfamily.

It carries out the reaction L-seryl-[protein] + ATP = O-phospho-L-seryl-[protein] + ADP + H(+). The enzyme catalyses L-threonyl-[protein] + ATP = O-phospho-L-threonyl-[protein] + ADP + H(+). In terms of biological role, mitogen-activated protein kinase kinase, part of the mkh1-mkk1-spm1 MAPK cascade that regulates regulates vegetative growth, conidial formation, colony surface hydrophobicity, osmotic stress, cell wall integrity maintenance, carbon and nitrogen source utilization, chitin distribution, septa formation, and pathogenicity. The chain is Mitogen-activated protein kinase kinase mkk1 from Cytospora mali (Apple Valsa canker fungus).